A 96-amino-acid chain; its full sequence is Large ribosomal subunit protein bL21 (96 aa).

This sequence belongs to the bacterial ribosomal protein bL21 family. Part of the 50S ribosomal subunit. Contacts protein L20.

In terms of biological role, this protein binds to 23S rRNA in the presence of protein L20. This Sulfurihydrogenibium sp. (strain YO3AOP1) protein is Large ribosomal subunit protein bL21.